The following is a 356-amino-acid chain: Zinc finger protein 830 (356 aa).

The stretch at 11–33 (AQEELRKLMKAKQRESSSKKRIE) forms a coiled coil. The segment at 47–69 (CVVCNSLIKSELLWPAHILGKQH) adopts a C2H2-type zinc-finger fold. The interval 71 to 195 (EKVAELKGTK…PTSSADNLPA (125 aa)) is disordered. Residues 80–90 (KATTSSPSNTI) are compositionally biased toward polar residues. Composition is skewed to basic and acidic residues over residues 99–118 (KGSE…EDHP) and 125–135 (LPEEFFEKEKT). Residues 150 to 165 (DYEDVDDDDAEEGEEY) show a composition bias toward acidic residues. A coiled-coil region spans residues 278–322 (AEEDEEGRLDRQIDEIDEQIQCYRRVEHLRDRKDTLQDAKMEVLK).

The protein resides in the nucleus. The protein localises to the chromosome. It localises to the nucleus speckle. Functionally, may act as an important regulator of the cell cycle that participates in the maintenance of genome integrity. The sequence is that of Zinc finger protein 830 from Xenopus laevis (African clawed frog).